The following is a 275-amino-acid chain: Digeranylgeranylglyceryl phosphate synthase (275 aa).

A run of 8 helical transmembrane segments spans residues 12 to 32 (VHNV…ATTW), 35 to 55 (TPLF…GYVI), 88 to 108 (IVLF…PFGF), 125 to 145 (KLGL…AYYG), 146 to 166 (GLAS…IFFF), 200 to 220 (WIIA…PYFL), 224 to 244 (VIYL…LILH), and 255 to 275 (SLMK…SLRI).

It belongs to the UbiA prenyltransferase family. DGGGP synthase subfamily. Mg(2+) serves as cofactor.

It is found in the cell membrane. It carries out the reaction sn-3-O-(geranylgeranyl)glycerol 1-phosphate + (2E,6E,10E)-geranylgeranyl diphosphate = 2,3-bis-O-(geranylgeranyl)-sn-glycerol 1-phosphate + diphosphate. Its pathway is membrane lipid metabolism; glycerophospholipid metabolism. Functionally, prenyltransferase that catalyzes the transfer of the geranylgeranyl moiety of geranylgeranyl diphosphate (GGPP) to the C2 hydroxyl of (S)-3-O-geranylgeranylglyceryl phosphate (GGGP). This reaction is the second ether-bond-formation step in the biosynthesis of archaeal membrane lipids. This Sulfolobus acidocaldarius (strain ATCC 33909 / DSM 639 / JCM 8929 / NBRC 15157 / NCIMB 11770) protein is Digeranylgeranylglyceryl phosphate synthase.